The sequence spans 172 residues: Lipoprotein signal peptidase (172 aa).

2 helical membrane-spanning segments follow: residues 70 to 90 (ERWL…AWIW) and 94 to 114 (AKGD…NIAD). Active-site residues include Asp123 and Asp142. A helical transmembrane segment spans residues 134–154 (PFLVFNVADAAITIGVLILVL).

The protein belongs to the peptidase A8 family.

It is found in the cell inner membrane. The catalysed reaction is Release of signal peptides from bacterial membrane prolipoproteins. Hydrolyzes -Xaa-Yaa-Zaa-|-(S,diacylglyceryl)Cys-, in which Xaa is hydrophobic (preferably Leu), and Yaa (Ala or Ser) and Zaa (Gly or Ala) have small, neutral side chains.. The protein operates within protein modification; lipoprotein biosynthesis (signal peptide cleavage). Functionally, this protein specifically catalyzes the removal of signal peptides from prolipoproteins. The polypeptide is Lipoprotein signal peptidase (Rhizorhabdus wittichii (strain DSM 6014 / CCUG 31198 / JCM 15750 / NBRC 105917 / EY 4224 / RW1) (Sphingomonas wittichii)).